The primary structure comprises 38 residues: Photosystem II reaction center protein L (38 aa).

The helical transmembrane segment at 17–37 (SLYWGLLLIFVLAVLFSSYIF) threads the bilayer.

It belongs to the PsbL family. PSII is composed of 1 copy each of membrane proteins PsbA, PsbB, PsbC, PsbD, PsbE, PsbF, PsbH, PsbI, PsbJ, PsbK, PsbL, PsbM, PsbT, PsbX, PsbY, PsbZ, Psb30/Ycf12, at least 3 peripheral proteins of the oxygen-evolving complex and a large number of cofactors. It forms dimeric complexes.

The protein resides in the plastid. The protein localises to the chloroplast thylakoid membrane. Its function is as follows. One of the components of the core complex of photosystem II (PSII). PSII is a light-driven water:plastoquinone oxidoreductase that uses light energy to abstract electrons from H(2)O, generating O(2) and a proton gradient subsequently used for ATP formation. It consists of a core antenna complex that captures photons, and an electron transfer chain that converts photonic excitation into a charge separation. This subunit is found at the monomer-monomer interface and is required for correct PSII assembly and/or dimerization. This is Photosystem II reaction center protein L from Ostreococcus tauri.